The chain runs to 245 residues: Geranylgeranylglyceryl phosphate synthase (245 aa).

Mg(2+) contacts are provided by D24 and S54. Residues 172-178 (YLEAGSG), 203-204 (GG), and 225-226 (GT) contribute to the sn-glycerol 1-phosphate site.

This sequence belongs to the GGGP/HepGP synthase family. Group II subfamily. The cofactor is Mg(2+).

The protein localises to the cytoplasm. It catalyses the reaction sn-glycerol 1-phosphate + (2E,6E,10E)-geranylgeranyl diphosphate = sn-3-O-(geranylgeranyl)glycerol 1-phosphate + diphosphate. It participates in membrane lipid metabolism; glycerophospholipid metabolism. Functionally, prenyltransferase that catalyzes the transfer of the geranylgeranyl moiety of geranylgeranyl diphosphate (GGPP) to the C3 hydroxyl of sn-glycerol-1-phosphate (G1P). This reaction is the first ether-bond-formation step in the biosynthesis of archaeal membrane lipids. This Staphylothermus marinus (strain ATCC 43588 / DSM 3639 / JCM 9404 / F1) protein is Geranylgeranylglyceryl phosphate synthase.